Reading from the N-terminus, the 388-residue chain is Diacylglycerol O-acyltransferase 2 (388 aa).

Topologically, residues Met1 to Gln69 are cytoplasmic. Positions Arg16 to Trp40 are disordered. A helical membrane pass occupies residues Val70–Ser88. Topologically, residues Ala89–Met92 are lumenal. Residues Tyr93–Phe112 traverse the membrane as a helical segment. Residues Asp113–Asn388 lie on the Cytoplasmic side of the membrane.

The protein belongs to the diacylglycerol acyltransferase family. In terms of assembly, forms multimeric complexes consisting of several DGAT2 subunits. Interacts with SLC27A1 and this interaction is enhanced in the presence of ZFYVE1. Predominantly expressed in liver and white adipose tissue. Expressed at lower level in mammary gland, testis and peripheral blood leukocytes. Expressed in sebaceous glands of normal skin but decreased psoriatic skin.

It localises to the endoplasmic reticulum membrane. The protein localises to the lipid droplet. Its subcellular location is the cytoplasm. It is found in the perinuclear region. It carries out the reaction an acyl-CoA + a 1,2-diacyl-sn-glycerol = a triacyl-sn-glycerol + CoA. It catalyses the reaction all-trans-retinol + an acyl-CoA = an all-trans-retinyl ester + CoA. The catalysed reaction is 2-(9Z-octadecenoyl)-glycerol + (9Z)-octadecenoyl-CoA = 1,2-di-(9Z-octadecenoyl)-sn-glycerol + CoA. The enzyme catalyses 1,2-di-(9Z-octadecenoyl)-sn-glycerol + (9Z)-octadecenoyl-CoA = 1,2,3-tri-(9Z-octadecenoyl)-glycerol + CoA. It carries out the reaction all-trans-retinol + hexadecanoyl-CoA = all-trans-retinyl hexadecanoate + CoA. It catalyses the reaction 1-O-(9Z-octadecenyl)-glycerol + (9Z)-octadecenoyl-CoA = 1-O-(9Z-octadecyl)-3-(9Z-octadecenoyl)-glycerol + CoA. The catalysed reaction is 1-(9Z-octadecenoyl)-glycerol + (9Z)-octadecenoyl-CoA = 1,2-di-(9Z-octadecenoyl)-glycerol + CoA. The enzyme catalyses 1,2-di-(9Z-octadecenoyl)-sn-glycerol + hexadecanoyl-CoA = 1,2-di-(9Z)-octadecenoyl-3-hexadecanoyl-sn-glycerol + CoA. It carries out the reaction 1,3-di-(9Z-octadecenoyl)-glycerol + (9Z)-octadecenoyl-CoA = 1,2,3-tri-(9Z-octadecenoyl)-glycerol + CoA. It catalyses the reaction 2,3-di-(9Z)-octadecenoyl-sn-glycerol + (9Z)-octadecenoyl-CoA = 1,2,3-tri-(9Z-octadecenoyl)-glycerol + CoA. The catalysed reaction is 2-(9Z-octadecenoyl)-glycerol + hexadecanoyl-CoA = 1-hexadecanoyl-2-(9Z-octadecenoyl)-sn-glycerol + CoA. The protein operates within glycerolipid metabolism; triacylglycerol biosynthesis. Inhibited by niacin. Essential acyltransferase that catalyzes the terminal and only committed step in triacylglycerol synthesis by using diacylglycerol and fatty acyl CoA as substrates. Required for synthesis and storage of intracellular triglycerides. Probably plays a central role in cytosolic lipid accumulation. In liver, is primarily responsible for incorporating endogenously synthesized fatty acids into triglycerides. Also functions as an acyl-CoA retinol acyltransferase (ARAT). Also able to use 1-monoalkylglycerol (1-MAkG) as an acyl acceptor for the synthesis of monoalkyl-monoacylglycerol (MAMAG). The polypeptide is Diacylglycerol O-acyltransferase 2 (Homo sapiens (Human)).